The following is a 301-amino-acid chain: Probable splicing factor ECU05_1440 (301 aa).

An RRM 1 domain is found at 1–70 (MQIFIGKIPN…APISVERANG (70 aa)). 2 disordered regions span residues 106 to 140 (PPMR…SFRM) and 255 to 301 (SKDE…AEND). 2 stretches are compositionally biased toward basic and acidic residues: residues 110 to 140 (YESR…SFRM) and 255 to 270 (SKDE…HMRS). The region spanning 182-255 (LKVVFENIAP…HILKTRSYLS (74 aa)) is the RRM 2 domain.

It belongs to the splicing factor SR family.

The protein localises to the nucleus. In terms of biological role, plays a role in splicing. This is Probable splicing factor ECU05_1440 from Encephalitozoon cuniculi (strain GB-M1) (Microsporidian parasite).